We begin with the raw amino-acid sequence, 374 residues long: Queuine tRNA-ribosyltransferase (374 aa).

The active-site Proton acceptor is the D89. Substrate is bound by residues D89–F93, D143, Q187, and G214. The tract at residues G245 to D251 is RNA binding. D264 functions as the Nucleophile in the catalytic mechanism. Positions T269–R273 are RNA binding; important for wobble base 34 recognition. Positions 302, 304, 307, and 333 each coordinate Zn(2+).

It belongs to the queuine tRNA-ribosyltransferase family. As to quaternary structure, homodimer. Within each dimer, one monomer is responsible for RNA recognition and catalysis, while the other monomer binds to the replacement base PreQ1. The cofactor is Zn(2+).

The catalysed reaction is 7-aminomethyl-7-carbaguanine + guanosine(34) in tRNA = 7-aminomethyl-7-carbaguanosine(34) in tRNA + guanine. Its pathway is tRNA modification; tRNA-queuosine biosynthesis. Catalyzes the base-exchange of a guanine (G) residue with the queuine precursor 7-aminomethyl-7-deazaguanine (PreQ1) at position 34 (anticodon wobble position) in tRNAs with GU(N) anticodons (tRNA-Asp, -Asn, -His and -Tyr). Catalysis occurs through a double-displacement mechanism. The nucleophile active site attacks the C1' of nucleotide 34 to detach the guanine base from the RNA, forming a covalent enzyme-RNA intermediate. The proton acceptor active site deprotonates the incoming PreQ1, allowing a nucleophilic attack on the C1' of the ribose to form the product. After dissociation, two additional enzymatic reactions on the tRNA convert PreQ1 to queuine (Q), resulting in the hypermodified nucleoside queuosine (7-(((4,5-cis-dihydroxy-2-cyclopenten-1-yl)amino)methyl)-7-deazaguanosine). This Psychromonas ingrahamii (strain DSM 17664 / CCUG 51855 / 37) protein is Queuine tRNA-ribosyltransferase.